The following is a 200-amino-acid chain: Protein-methionine-sulfoxide reductase heme-binding subunit MsrQ (200 aa).

The next 5 helical transmembrane spans lie at 8 to 28 (ITWL…WLFY), 54 to 74 (LLLA…PLLI), 79 to 99 (LLGL…SLLE), 116 to 136 (PYLT…LTSF), and 153 to 173 (FIYL…KILS).

The protein belongs to the MsrQ family. In terms of assembly, heterodimer of a catalytic subunit (MsrP) and a heme-binding subunit (MsrQ). FMN is required as a cofactor. The cofactor is heme b.

The protein localises to the cell inner membrane. In terms of biological role, part of the MsrPQ system that repairs oxidized periplasmic proteins containing methionine sulfoxide residues (Met-O), using respiratory chain electrons. Thus protects these proteins from oxidative-stress damage caused by reactive species of oxygen and chlorine generated by the host defense mechanisms. MsrPQ is essential for the maintenance of envelope integrity under bleach stress, rescuing a wide series of structurally unrelated periplasmic proteins from methionine oxidation. MsrQ provides electrons for reduction to the reductase catalytic subunit MsrP, using the quinone pool of the respiratory chain. The polypeptide is Protein-methionine-sulfoxide reductase heme-binding subunit MsrQ (Cronobacter sakazakii (strain ATCC BAA-894) (Enterobacter sakazakii)).